A 205-amino-acid polypeptide reads, in one-letter code: Thymidine kinase (205 aa).

Residues 9–16 and 88–91 each bind ATP; these read SAMNAGKT and DECH. E89 (proton acceptor) is an active-site residue. C146, C148, C183, and H186 together coordinate Zn(2+).

The protein belongs to the thymidine kinase family. As to quaternary structure, homotetramer.

Its subcellular location is the cytoplasm. The catalysed reaction is thymidine + ATP = dTMP + ADP + H(+). The polypeptide is Thymidine kinase (Blochmanniella pennsylvanica (strain BPEN)).